A 348-amino-acid polypeptide reads, in one-letter code: Dihydroorotase (348 aa).

His14 and His16 together coordinate Zn(2+). Substrate is bound by residues 16-18 (HLR) and Asn42. Residues Lys100, His137, and His175 each coordinate Zn(2+). Lys100 carries the post-translational modification N6-carboxylysine. Position 137 (His137) interacts with substrate. A substrate-binding site is contributed by Leu220. Asp248 contacts Zn(2+). The active site involves Asp248. Positions 252 and 264 each coordinate substrate.

It belongs to the metallo-dependent hydrolases superfamily. DHOase family. Class II DHOase subfamily. As to quaternary structure, homodimer. Zn(2+) serves as cofactor.

It carries out the reaction (S)-dihydroorotate + H2O = N-carbamoyl-L-aspartate + H(+). The protein operates within pyrimidine metabolism; UMP biosynthesis via de novo pathway; (S)-dihydroorotate from bicarbonate: step 3/3. Functionally, catalyzes the reversible cyclization of carbamoyl aspartate to dihydroorotate. In Pseudomonas aeruginosa (strain LESB58), this protein is Dihydroorotase.